The primary structure comprises 401 residues: Diphosphomevalonate decarboxylase (401 aa).

Alanine 2 is subject to N-acetylalanine. Residues tyrosine 24–lysine 27, arginine 79, serine 157–arginine 162, and threonine 213 each bind (R)-5-diphosphomevalonate. Residues valine 382–leucine 401 are disordered.

It belongs to the diphosphomevalonate decarboxylase family. As to quaternary structure, homodimer.

It is found in the cytoplasm. The catalysed reaction is (R)-5-diphosphomevalonate + ATP = isopentenyl diphosphate + ADP + phosphate + CO2. The protein operates within steroid biosynthesis; cholesterol biosynthesis. Functionally, catalyzes the ATP dependent decarboxylation of (R)-5-diphosphomevalonate to form isopentenyl diphosphate (IPP). Functions in the mevalonate (MVA) pathway leading to isopentenyl diphosphate (IPP), a key precursor for the biosynthesis of isoprenoids and sterol synthesis. The protein is Diphosphomevalonate decarboxylase (Mvd) of Rattus norvegicus (Rat).